The sequence spans 533 residues: MSIQVEHPAGGYKKLFETVEELSSPLTAHVTGRIPLWLTGSLLRCGPGLFEVGSEPFYHLFDGQALLHKFDFKEGHVTYHRRFIRTDAYVRAMTEKRIVITEFGTCAFPDPCKNIFSRFFSYFRGVEVTDNALVNVYPVGEDYYACTETNFITKINPETLETIKQVDLCNYVSVNGATAHPHIENDGTVYNIGNCFGKNFSIAYNIVKIPPLQADKEDPISKSEVVVQFPCSDRFKPSYVHSFGLTPNYIVFVETPVKINLLKFLSSWSLWGANYMDCFESNETMGVWLHIADKKRKKYLNNKYRTSSFNLFHHINTYEDNEFLIVDLCCWKGFEFVYNYLYLANLRENWEEVKKNARKAPQPEVRRYVLPLNIDKADTGKNLVTLPNTTATATLRSDETIWLEPEVLFSGPRQAFEFPQINYQKSGGKPYTYAYGLGLNHFVPDRLCKLNVKTKETWVWQEPDSYPSEPIFVSHPDALEEDDGVVLSVVVSPGAGQKPAYLLILNAKDLSEVARAEVEINIPVTFHGLFKKS.

N-acetylserine is present on Ser-2. Phosphothreonine occurs at positions 101 and 105. The S-palmitoyl cysteine; in membrane form moiety is linked to residue Cys-112. Lys-113 bears the N6-acetyllysine mark. Ser-117 is modified (phosphoserine). Position 180 (His-180) interacts with Fe cation. Cys-231 carries S-palmitoyl cysteine; in membrane form lipidation. The Fe cation site is built by His-241 and His-313. 2 S-palmitoyl cysteine; in membrane form lipidation sites follow: Cys-329 and Cys-330. A Fe cation-binding site is contributed by His-527.

This sequence belongs to the carotenoid oxygenase family. Interacts with MYO7A; this mediates light-dependent intracellular transport of RPE65. Fe(2+) serves as cofactor. In terms of processing, palmitoylation by LRAT regulates ligand binding specificity; the palmitoylated form (membrane form) specifically binds all-trans-retinyl-palmitate, while the soluble unpalmitoylated form binds all-trans-retinol (vitamin A). As to expression, retinal pigment epithelium specific.

It localises to the cytoplasm. The protein localises to the cell membrane. Its subcellular location is the microsome membrane. The enzyme catalyses an all-trans-retinyl ester + H2O = 11-cis-retinol + a fatty acid + H(+). It carries out the reaction lutein = (3R,3'S)-zeaxanthin. It catalyses the reaction all-trans-retinyl hexadecanoate + H2O = 11-cis-retinol + hexadecanoate + H(+). Its function is as follows. Critical isomerohydrolase in the retinoid cycle involved in regeneration of 11-cis-retinal, the chromophore of rod and cone opsins. Catalyzes the cleavage and isomerization of all-trans-retinyl fatty acid esters to 11-cis-retinol which is further oxidized by 11-cis retinol dehydrogenase to 11-cis-retinal for use as visual chromophore. Essential for the production of 11-cis retinal for both rod and cone photoreceptors. Also capable of catalyzing the isomerization of lutein to meso-zeaxanthin an eye-specific carotenoid. The soluble form binds vitamin A (all-trans-retinol), making it available for LRAT processing to all-trans-retinyl ester. The membrane form, palmitoylated by LRAT, binds all-trans-retinyl esters, making them available for IMH (isomerohydrolase) processing to all-cis-retinol. The soluble form is regenerated by transferring its palmitoyl groups onto 11-cis-retinol, a reaction catalyzed by LRAT. This is Retinoid isomerohydrolase (RPE65) from Canis lupus familiaris (Dog).